The primary structure comprises 528 residues: Putative ABC transporter ATP-binding protein MA_1418 (528 aa).

2 ABC transporter domains span residues 2-242 (IELR…TNLT) and 262-494 (ISVK…SDYK). Residues 36 to 43 (GHSAAGKT) and 294 to 301 (GENGSGKT) each bind ATP.

It belongs to the ABC transporter superfamily.

It is found in the cell membrane. Probably part of an ABC transporter complex. Responsible for energy coupling to the transport system. The polypeptide is Putative ABC transporter ATP-binding protein MA_1418 (Methanosarcina acetivorans (strain ATCC 35395 / DSM 2834 / JCM 12185 / C2A)).